A 313-amino-acid chain; its full sequence is uncharacterized protein (313 aa).

To M.jannaschii MJ0977 C-terminal region.

This is an uncharacterized protein from Methanocaldococcus jannaschii (strain ATCC 43067 / DSM 2661 / JAL-1 / JCM 10045 / NBRC 100440) (Methanococcus jannaschii).